The chain runs to 361 residues: MAGNSIGQHFRVTTFGESHGIALGCIVDGCPPGLEITEADLQTDLDRRRPGTSRYTTQRREPDEVKILSGVFEGQTTGTSIGLMIENTDQRSKDYSDIKDKFRPGHADYTYHQKYGVRDYRGGGRSSARETAMRVAAGAIAKKYLKDEFGVEIRAYLSQMGDVSIDKVDWNEIENNAFFCPDADKVEAFDQLIRDLKKEGDSIGAKIQVVATNVPVGLGEPVFDRLDADIAHALMSINAVKGVEIGDGFDVVNQKGSDHRDTLSPEGFGSNHAGGILGGISTGQEIVANIALKPTSSITVPGETITKEGEPTQLITKGRHDPCVGIRAVPIAEAMLAIVVMDHLLRHRGQNHGVKTETPKI.

The NADP(+) site is built by Arg-48 and Arg-54. FMN contacts are provided by residues 125 to 127 (RSS), 238 to 239 (NA), Gly-278, 293 to 297 (KPTSS), and Arg-319.

This sequence belongs to the chorismate synthase family. In terms of assembly, homotetramer. FMNH2 serves as cofactor.

It catalyses the reaction 5-O-(1-carboxyvinyl)-3-phosphoshikimate = chorismate + phosphate. It participates in metabolic intermediate biosynthesis; chorismate biosynthesis; chorismate from D-erythrose 4-phosphate and phosphoenolpyruvate: step 7/7. Catalyzes the anti-1,4-elimination of the C-3 phosphate and the C-6 proR hydrogen from 5-enolpyruvylshikimate-3-phosphate (EPSP) to yield chorismate, which is the branch point compound that serves as the starting substrate for the three terminal pathways of aromatic amino acid biosynthesis. This reaction introduces a second double bond into the aromatic ring system. The polypeptide is Chorismate synthase (Vibrio campbellii (strain ATCC BAA-1116)).